The chain runs to 240 residues: Ribonuclease PH (240 aa).

Phosphate is bound by residues arginine 86 and 124-126 (GTR).

The protein belongs to the RNase PH family. Homohexameric ring arranged as a trimer of dimers.

It carries out the reaction tRNA(n+1) + phosphate = tRNA(n) + a ribonucleoside 5'-diphosphate. In terms of biological role, phosphorolytic 3'-5' exoribonuclease that plays an important role in tRNA 3'-end maturation. Removes nucleotide residues following the 3'-CCA terminus of tRNAs; can also add nucleotides to the ends of RNA molecules by using nucleoside diphosphates as substrates, but this may not be physiologically important. Probably plays a role in initiation of 16S rRNA degradation (leading to ribosome degradation) during starvation. The polypeptide is Ribonuclease PH (Rickettsia prowazekii (strain Madrid E)).